The primary structure comprises 213 residues: Glycerol-3-phosphate acyltransferase (213 aa).

6 helical membrane passes run 4 to 24 (IILL…LWIG), 48 to 68 (ILGV…GTLA), 71 to 91 (LPLF…LAVI), 113 to 133 (VILG…IIVL), 144 to 164 (VIGA…GFIL), and 165 to 185 (TSYD…IILR).

Belongs to the PlsY family. As to quaternary structure, probably interacts with PlsX.

The protein localises to the cell membrane. It carries out the reaction an acyl phosphate + sn-glycerol 3-phosphate = a 1-acyl-sn-glycero-3-phosphate + phosphate. It functions in the pathway lipid metabolism; phospholipid metabolism. In terms of biological role, catalyzes the transfer of an acyl group from acyl-phosphate (acyl-PO(4)) to glycerol-3-phosphate (G3P) to form lysophosphatidic acid (LPA). This enzyme utilizes acyl-phosphate as fatty acyl donor, but not acyl-CoA or acyl-ACP. This chain is Glycerol-3-phosphate acyltransferase, found in Lactococcus lactis subsp. lactis (strain IL1403) (Streptococcus lactis).